A 212-amino-acid chain; its full sequence is Thymidylate kinase (212 aa).

ATP is bound at residue 11 to 18 (GPEGAGKT).

It belongs to the thymidylate kinase family.

It carries out the reaction dTMP + ATP = dTDP + ADP. Functionally, phosphorylation of dTMP to form dTDP in both de novo and salvage pathways of dTTP synthesis. The chain is Thymidylate kinase from Streptococcus pneumoniae serotype 19F (strain G54).